A 387-amino-acid chain; its full sequence is Sulfate adenylyltransferase (387 aa).

The protein belongs to the sulfate adenylyltransferase family.

It carries out the reaction sulfate + ATP + H(+) = adenosine 5'-phosphosulfate + diphosphate. It functions in the pathway sulfur metabolism; hydrogen sulfide biosynthesis; sulfite from sulfate: step 1/3. The protein is Sulfate adenylyltransferase (sat) of Deinococcus radiodurans (strain ATCC 13939 / DSM 20539 / JCM 16871 / CCUG 27074 / LMG 4051 / NBRC 15346 / NCIMB 9279 / VKM B-1422 / R1).